A 338-amino-acid chain; its full sequence is MENLDALVSQALEAVRHTEDVNALEQIRVHYLGKKGELTQVMKTLGDLPAEERPKVGALINVAKEKVQDVLNARKTELEGAALAARLAAERIDVTLPGRGQLSGGLHPVTRTLERIEQCFSRIGYEVAEGPEVEDDYHNFEALNIPGHHPARAMHDTFYFNANMLLRTHTSPVQVRTMESQQPPIRIVCPGRVYRCDSDLTHSPMFHQVEGLLVDEGVSFADLKGTIEEFLRAFFEKQLEVRFRPSFFPFTEPSAEVDIQCVICSGNGCRVCKQTGWLEVMGCGMVHPNVLRMSNIDPEKFQGFAFGMGAERLAMLRYGVNDLRLFFDNDLRFLGQFR.

Mg(2+) is bound at residue glutamate 252.

This sequence belongs to the class-II aminoacyl-tRNA synthetase family. Phe-tRNA synthetase alpha subunit type 1 subfamily. As to quaternary structure, tetramer of two alpha and two beta subunits. Mg(2+) is required as a cofactor.

Its subcellular location is the cytoplasm. The catalysed reaction is tRNA(Phe) + L-phenylalanine + ATP = L-phenylalanyl-tRNA(Phe) + AMP + diphosphate + H(+). The polypeptide is Phenylalanine--tRNA ligase alpha subunit (Pseudomonas aeruginosa (strain ATCC 15692 / DSM 22644 / CIP 104116 / JCM 14847 / LMG 12228 / 1C / PRS 101 / PAO1)).